Reading from the N-terminus, the 426-residue chain is Growth-regulating factor 9 (426 aa).

Residues 92–127 (PFTPSQWMELEHQALIYKYLNAKAPIPSSLLISISK) enclose the QLQ domain. Positions 151–195 (DPEPGRCRRTDGKKWRCSKEAMADHKYCERHINRNRHRSRKPVEN) constitute a WRC domain. Short sequence motifs (bipartite nuclear localization signal) lie at residues 156–166 (RCRRTDGKKWR) and 184–191 (RNRHRSRK). A disordered region spans residues 184-222 (RNRHRSRKPVENQSRKTVKETPCAGSLPSSVGQGSFKKA). Over residues 191–202 (KPVENQSRKTVK) the composition is skewed to basic and acidic residues.

It belongs to the GRF family.

The protein localises to the nucleus. Its function is as follows. Transcription activator that plays a regulatory role in gibberellin-induced stem elongation. The sequence is that of Growth-regulating factor 9 (GRF9) from Oryza sativa subsp. japonica (Rice).